Reading from the N-terminus, the 95-residue chain is Aspartyl/glutamyl-tRNA(Asn/Gln) amidotransferase subunit C (95 aa).

This sequence belongs to the GatC family. Heterotrimer of A, B and C subunits.

It carries out the reaction L-glutamyl-tRNA(Gln) + L-glutamine + ATP + H2O = L-glutaminyl-tRNA(Gln) + L-glutamate + ADP + phosphate + H(+). The catalysed reaction is L-aspartyl-tRNA(Asn) + L-glutamine + ATP + H2O = L-asparaginyl-tRNA(Asn) + L-glutamate + ADP + phosphate + 2 H(+). Allows the formation of correctly charged Asn-tRNA(Asn) or Gln-tRNA(Gln) through the transamidation of misacylated Asp-tRNA(Asn) or Glu-tRNA(Gln) in organisms which lack either or both of asparaginyl-tRNA or glutaminyl-tRNA synthetases. The reaction takes place in the presence of glutamine and ATP through an activated phospho-Asp-tRNA(Asn) or phospho-Glu-tRNA(Gln). The chain is Aspartyl/glutamyl-tRNA(Asn/Gln) amidotransferase subunit C from Rhodospirillum rubrum (strain ATCC 11170 / ATH 1.1.1 / DSM 467 / LMG 4362 / NCIMB 8255 / S1).